The sequence spans 594 residues: Arrestin domain-containing protein C584.15c (594 aa).

The span at 368–398 (NPQLQSGFTTPNLSRRNSSDFGPNSPVNIHS) shows a compositional bias: polar residues. 2 disordered regions span residues 368–417 (NPQL…NSNA) and 531–594 (EATR…RGVR). A compositionally biased stretch (low complexity) spans 404–417 (SGQQPSSPASNSNA). Residues 534-552 (RPSSPTESVEIPSNTTTIA) show a composition bias toward polar residues. Residues 565–574 (PSTPAPPLPS) show a composition bias toward pro residues. S584 is modified (phosphoserine).

It belongs to the arrestin family.

In Schizosaccharomyces pombe (strain 972 / ATCC 24843) (Fission yeast), this protein is Arrestin domain-containing protein C584.15c.